Here is a 728-residue protein sequence, read N- to C-terminus: Catalase-peroxidase 1 (728 aa).

A signal peptide spans Met-1 to Ala-22. The tryptophyl-tyrosyl-methioninium (Trp-Tyr) (with M-251) cross-link spans Trp-97–Tyr-225. His-98 functions as the Proton acceptor in the catalytic mechanism. A cross-link (tryptophyl-tyrosyl-methioninium (Tyr-Met) (with W-97)) is located at residues Tyr-225–Met-251. His-266 contributes to the heme b binding site.

It belongs to the peroxidase family. Peroxidase/catalase subfamily. As to quaternary structure, homodimer or homotetramer. Heme b serves as cofactor. In terms of processing, formation of the three residue Trp-Tyr-Met cross-link is important for the catalase, but not the peroxidase activity of the enzyme.

It carries out the reaction H2O2 + AH2 = A + 2 H2O. The enzyme catalyses 2 H2O2 = O2 + 2 H2O. Bifunctional enzyme with both catalase and broad-spectrum peroxidase activity. This Shewanella sp. (strain MR-7) protein is Catalase-peroxidase 1.